We begin with the raw amino-acid sequence, 137 residues long: Large-conductance mechanosensitive channel (137 aa).

A run of 2 helical transmembrane segments spans residues 10–30 (FAMRGNVVDLAVGVIIGAAFG) and 76–96 (GVFIQNVFDFVIVAFAIFVAI).

It belongs to the MscL family. In terms of assembly, homopentamer.

The protein localises to the cell inner membrane. In terms of biological role, channel that opens in response to stretch forces in the membrane lipid bilayer. May participate in the regulation of osmotic pressure changes within the cell. This is Large-conductance mechanosensitive channel from Salmonella choleraesuis (strain SC-B67).